The chain runs to 469 residues: GDNF family receptor alpha-1 (469 aa).

Residues 1–27 (MFLALLYLALPLADVLLSAEVSGLPGG) form the signal peptide. Repeat copies occupy residues 28–116 (DRLD…LQGN), 149–237 (KGNN…YEDR), and 238–341 (EKPN…KNAI). Residues cysteine 39 and cysteine 45 are joined by a disulfide bond. Asparagine 62 and asparagine 163 each carry an N-linked (GlcNAc...) asparagine glycan. 10 disulfides stabilise this stretch: cysteine 153/cysteine 213, cysteine 160/cysteine 166, cysteine 177/cysteine 191, cysteine 186/cysteine 232, cysteine 215/cysteine 220, cysteine 242/cysteine 312, cysteine 249/cysteine 255, cysteine 266/cysteine 284, cysteine 276/cysteine 336, and cysteine 314/cysteine 324. Residues asparagine 346 and asparagine 405 are each glycosylated (N-linked (GlcNAc...) asparagine). Serine 430 is lipidated: GPI-anchor amidated serine. Residues 431–469 (HISSENSFALPTSFYPSTPLILMTIALSLFLFLSSSVVL) constitute a propeptide, removed in mature form.

This sequence belongs to the GDNFR family. As to quaternary structure, interacts with GDNF ligand and RET: forms a 2:2:2 ternary complex composed of GDNF ligand, GFRA1 and RET receptor.

The protein localises to the cell membrane. The protein resides in the golgi apparatus. It is found in the trans-Golgi network. It localises to the endosome. Its subcellular location is the multivesicular body. In terms of biological role, coreceptor for GDNF, a neurotrophic factor that enhances survival and morphological differentiation of dopaminergic neurons and increases their high-affinity dopamine uptake. GDNF-binding leads to autophosphorylation and activation of the RET receptor. The polypeptide is GDNF family receptor alpha-1 (GFRA1) (Gallus gallus (Chicken)).